The following is a 259-amino-acid chain: Haloacid dehalogenase-like hydrolase domain-containing protein 2 (259 aa).

The Mg(2+) site is built by aspartate 13 and serine 15. Substrate-binding positions include 13–15 (DLS) and 46–47 (TN). Residues 47-71 (NTTKESKQDLLERLKKLEFDISEDE) are a coiled coil. An N6-succinyllysine modification is found at lysine 50. Position 179 (lysine 179) interacts with substrate. Position 204 (aspartate 204) interacts with Mg(2+).

This sequence belongs to the HAD-like hydrolase superfamily. Requires Mg(2+) as cofactor.

The protein is Haloacid dehalogenase-like hydrolase domain-containing protein 2 (HDHD2) of Bos taurus (Bovine).